Reading from the N-terminus, the 530-residue chain is Structure-specific endonuclease subunit SLX1 homolog 2 (530 aa).

The GIY-YIG domain maps to Arg-4–Gln-89. Residues Cys-232 to Cys-365 form an SLX1-type zinc finger. 3 disordered regions span residues Ala-276–His-306, Asn-410–Asp-438, and Leu-474–Asp-502. Basic and acidic residues predominate over residues Arg-283–Ser-298.

Belongs to the SLX1 family. As to quaternary structure, forms a heterodimer with a member of the SLX4 family. Requires a divalent metal cation as cofactor.

The protein localises to the nucleus. Catalytic subunit of a heterodimeric structure-specific endonuclease that resolves DNA secondary structures generated during DNA repair and recombination. Has endonuclease activity towards branched DNA substrates, introducing single-strand cuts in duplex DNA close to junctions with ss-DNA. This chain is Structure-specific endonuclease subunit SLX1 homolog 2, found in Trypanosoma cruzi (strain CL Brener).